A 335-amino-acid chain; its full sequence is Tetraacyldisaccharide 4'-kinase (335 aa).

58–65 (TVGGVGKT) contributes to the ATP binding site.

This sequence belongs to the LpxK family.

It carries out the reaction a lipid A disaccharide + ATP = a lipid IVA + ADP + H(+). It participates in glycolipid biosynthesis; lipid IV(A) biosynthesis; lipid IV(A) from (3R)-3-hydroxytetradecanoyl-[acyl-carrier-protein] and UDP-N-acetyl-alpha-D-glucosamine: step 6/6. Transfers the gamma-phosphate of ATP to the 4'-position of a tetraacyldisaccharide 1-phosphate intermediate (termed DS-1-P) to form tetraacyldisaccharide 1,4'-bis-phosphate (lipid IVA). The polypeptide is Tetraacyldisaccharide 4'-kinase (Caulobacter sp. (strain K31)).